Reading from the N-terminus, the 489-residue chain is Betaine aldehyde dehydrogenase (489 aa).

K(+) is bound by residues Thr26 and Asp93. Position 150-152 (150-152 (GAW)) interacts with NAD(+). Lys162 (charge relay system) is an active-site residue. Residue 176 to 179 (KPSE) participates in NAD(+) binding. A K(+)-binding site is contributed by Val180. Residue 229–232 (GVET) participates in NAD(+) binding. A K(+)-binding site is contributed by Leu245. The active-site Proton acceptor is the Glu251. 3 residues coordinate NAD(+): Gly253, Cys285, and Glu386. Cys285 acts as the Nucleophile in catalysis. Cys285 carries the cysteine sulfenic acid (-SOH) modification. Lys456 and Gly459 together coordinate K(+). Residue Glu463 is the Charge relay system of the active site.

This sequence belongs to the aldehyde dehydrogenase family. In terms of assembly, dimer of dimers. It depends on K(+) as a cofactor.

The catalysed reaction is betaine aldehyde + NAD(+) + H2O = glycine betaine + NADH + 2 H(+). It participates in amine and polyamine biosynthesis; betaine biosynthesis via choline pathway; betaine from betaine aldehyde: step 1/1. In terms of biological role, involved in the biosynthesis of the osmoprotectant glycine betaine. Catalyzes the irreversible oxidation of betaine aldehyde to the corresponding acid. This chain is Betaine aldehyde dehydrogenase, found in Paraburkholderia phymatum (strain DSM 17167 / CIP 108236 / LMG 21445 / STM815) (Burkholderia phymatum).